The primary structure comprises 429 residues: Dihydroorotase (429 aa).

Zn(2+) contacts are provided by histidine 62 and histidine 64. Residues histidine 64–arginine 66 and asparagine 96 each bind substrate. Positions 154, 181, and 234 each coordinate Zn(2+). Asparagine 280 contributes to the substrate binding site. Position 307 (aspartate 307) interacts with Zn(2+). Aspartate 307 is an active-site residue. Substrate contacts are provided by residues histidine 311 and phenylalanine 325–glycine 326.

The protein belongs to the metallo-dependent hydrolases superfamily. DHOase family. Class I DHOase subfamily. The cofactor is Zn(2+).

It carries out the reaction (S)-dihydroorotate + H2O = N-carbamoyl-L-aspartate + H(+). It functions in the pathway pyrimidine metabolism; UMP biosynthesis via de novo pathway; (S)-dihydroorotate from bicarbonate: step 3/3. Catalyzes the reversible cyclization of carbamoyl aspartate to dihydroorotate. This chain is Dihydroorotase, found in Latilactobacillus sakei subsp. sakei (strain 23K) (Lactobacillus sakei subsp. sakei).